Consider the following 164-residue polypeptide: NADH-quinone oxidoreductase subunit I (164 aa).

4Fe-4S ferredoxin-type domains follow at residues 55–85 (LRRYPNGEERCIACKLCEAICPAQAITIDAE) and 95–124 (TRYDIDMTKCIYCGFCQEACPVDAIVEGPN). Residues Cys-65, Cys-68, Cys-71, Cys-75, Cys-104, Cys-107, Cys-110, and Cys-114 each coordinate [4Fe-4S] cluster.

The protein belongs to the complex I 23 kDa subunit family. NDH-1 is composed of 14 different subunits. Subunits NuoA, H, J, K, L, M, N constitute the membrane sector of the complex. Requires [4Fe-4S] cluster as cofactor.

Its subcellular location is the cell inner membrane. It catalyses the reaction a quinone + NADH + 5 H(+)(in) = a quinol + NAD(+) + 4 H(+)(out). Functionally, NDH-1 shuttles electrons from NADH, via FMN and iron-sulfur (Fe-S) centers, to quinones in the respiratory chain. The immediate electron acceptor for the enzyme in this species is believed to be ubiquinone. Couples the redox reaction to proton translocation (for every two electrons transferred, four hydrogen ions are translocated across the cytoplasmic membrane), and thus conserves the redox energy in a proton gradient. In Jannaschia sp. (strain CCS1), this protein is NADH-quinone oxidoreductase subunit I.